Consider the following 639-residue polypeptide: E3 ubiquitin-protein ligase HEL2 (639 aa).

The tract at residues 1 to 55 is disordered; it reads MSESVKENVTPTRNFRRTQGPQNNTKPHNDRKNFRRKQKKNNLSAEPNLTTSSAD. Residue S2 is modified to N-acetylserine. Composition is skewed to polar residues over residues 7–26 and 43–54; these read ENVT…NNTK and LSAEPNLTTSSA. T57 bears the Phosphothreonine mark. Residues 64–104 form an RING-type zinc finger; that stretch reads CVICARKLTYVSLTPCHHKTCHICGFRQRALYNKKSCLICR. The LIM zinc-binding domain maps to 222 to 292; it reads PMCAFCSGKR…QTCLDNKFVV (71 aa). Residues 343–354 are compositionally biased toward low complexity; the sequence is SISSLPGSSSGS. 2 disordered regions span residues 343–367 and 550–631; these read SISS…PEES and LESK…GKQK. Position 354 is a phosphoserine (S354).

It belongs to the ZNF598/HEL2 family. In terms of assembly, interacts with the E2 ubiquitin-conjugating enzyme UBC4. Interacts with histones H3 and H4.

The protein localises to the cytoplasm. The enzyme catalyses S-ubiquitinyl-[E2 ubiquitin-conjugating enzyme]-L-cysteine + [acceptor protein]-L-lysine = [E2 ubiquitin-conjugating enzyme]-L-cysteine + N(6)-ubiquitinyl-[acceptor protein]-L-lysine.. The protein operates within protein modification; protein ubiquitination. Functionally, E3 ubiquitin-protein ligase that plays a key role in the ribosome quality control (RQC), a pathway that takes place when a ribosome has stalled during translation, leading to degradation of nascent peptide chains. HEL2 is activated when ribosomes are stalled within an mRNA following translation of prematurely polyadenylated mRNAs. Acts as a ribosome collision sensor: specifically recognizes and binds collided ribosome and ubiquitinates the 40S ribosomal proteins RPS20/uS10 and RPS3/uS3. Catalyzes 'Lys-63'-linked polyubiquitination of RPS20/uS10, promoting recruitment of the RQT (ribosome quality control trigger) complex, which drives the disassembly of stalled ribosomes, followed by degradation of nascent peptides. HEL2 also acts as an activator of the No-Go decay (NGD) pathway by mediating polyubiquitination of monoubiquitinated RPS3/uS3 and RPS7/es7: RPS3/uS3 and RPS7/es7 are first monoubiquitinated by MAG2 and MOT2/NOT4, respectively, and HEL2 mediates formation of 'Lys-63'-linked polyubiquitin chains on monoubiquitin, leading to activation of the NGD pathway in a CUE2-mediated endonucleolytic cleavage. Polyubiquitination of RPS3/uS3 also triggers degradation of non-functional 18S rRNA. The RQC pathway and the integrated stress response (ISR) antagonize each other: HEL2 prevents the activation of GCN2, while GCN2 suppresses RQC activation. The RQC pathway functions as a preventive quality control in the secretory pathway: HEL2 binds preferentially to the pre-engaged secretory ribosome-nascent chain complexes and prevents mistargeting of secretory proteins into mitochondria. Independently of its role in RQC, also involved in the polyubiquitination and proteasomal-degradation of excess histone proteins. The sequence is that of E3 ubiquitin-protein ligase HEL2 from Saccharomyces cerevisiae (strain ATCC 204508 / S288c) (Baker's yeast).